A 179-amino-acid chain; its full sequence is Transcription factor BOA15 (179 aa).

Its subcellular location is the nucleus. In terms of biological role, transcription factor that probably coregulates the gene clusters that mediates the biosynthesis of botcinin acid and its botcinin derivatives, acetate-derived polyketides that contribute to virulence when combined with the sesquiterpene botrydial. Botcinin acid and its derivatives have been shown to induce chlorosis and necrosis during host plant infection, but also have antifungal activities. In Botryotinia fuckeliana (strain B05.10) (Noble rot fungus), this protein is Transcription factor BOA15.